The following is a 150-amino-acid chain: D-aminoacyl-tRNA deacylase (150 aa).

The Gly-cisPro motif, important for rejection of L-amino acids signature appears at 138–139 (GP).

Belongs to the DTD family. As to quaternary structure, homodimer.

It is found in the cytoplasm. The catalysed reaction is glycyl-tRNA(Ala) + H2O = tRNA(Ala) + glycine + H(+). It carries out the reaction a D-aminoacyl-tRNA + H2O = a tRNA + a D-alpha-amino acid + H(+). An aminoacyl-tRNA editing enzyme that deacylates mischarged D-aminoacyl-tRNAs. Also deacylates mischarged glycyl-tRNA(Ala), protecting cells against glycine mischarging by AlaRS. Acts via tRNA-based rather than protein-based catalysis; rejects L-amino acids rather than detecting D-amino acids in the active site. By recycling D-aminoacyl-tRNA to D-amino acids and free tRNA molecules, this enzyme counteracts the toxicity associated with the formation of D-aminoacyl-tRNA entities in vivo and helps enforce protein L-homochirality. In Sorangium cellulosum (strain So ce56) (Polyangium cellulosum (strain So ce56)), this protein is D-aminoacyl-tRNA deacylase.